The sequence spans 429 residues: Enolase (429 aa).

Glutamine 168 contacts (2R)-2-phosphoglycerate. The active-site Proton donor is the glutamate 210. Residues aspartate 247, glutamate 288, and aspartate 315 each contribute to the Mg(2+) site. Residues lysine 340, arginine 369, serine 370, and lysine 391 each coordinate (2R)-2-phosphoglycerate. Catalysis depends on lysine 340, which acts as the Proton acceptor.

It belongs to the enolase family. Requires Mg(2+) as cofactor.

The protein resides in the cytoplasm. It is found in the secreted. Its subcellular location is the cell surface. The catalysed reaction is (2R)-2-phosphoglycerate = phosphoenolpyruvate + H2O. Its pathway is carbohydrate degradation; glycolysis; pyruvate from D-glyceraldehyde 3-phosphate: step 4/5. Functionally, catalyzes the reversible conversion of 2-phosphoglycerate (2-PG) into phosphoenolpyruvate (PEP). It is essential for the degradation of carbohydrates via glycolysis. The polypeptide is Enolase (Trichormus variabilis (strain ATCC 29413 / PCC 7937) (Anabaena variabilis)).